Reading from the N-terminus, the 393-residue chain is NAD(P)H-quinone oxidoreductase subunit H, chloroplastic (393 aa).

The protein belongs to the complex I 49 kDa subunit family. In terms of assembly, NDH is composed of at least 16 different subunits, 5 of which are encoded in the nucleus. Interacts with the chaperonin CNP60B4 subunit.

The protein resides in the plastid. It is found in the chloroplast thylakoid membrane. It catalyses the reaction a plastoquinone + NADH + (n+1) H(+)(in) = a plastoquinol + NAD(+) + n H(+)(out). The enzyme catalyses a plastoquinone + NADPH + (n+1) H(+)(in) = a plastoquinol + NADP(+) + n H(+)(out). Functionally, NDH shuttles electrons from NAD(P)H:plastoquinone, via FMN and iron-sulfur (Fe-S) centers, to quinones in the photosynthetic chain and possibly in a chloroplast respiratory chain. The immediate electron acceptor for the enzyme in this species is believed to be plastoquinone. Couples the redox reaction to proton translocation, and thus conserves the redox energy in a proton gradient. The chain is NAD(P)H-quinone oxidoreductase subunit H, chloroplastic from Arabidopsis thaliana (Mouse-ear cress).